Reading from the N-terminus, the 701-residue chain is Dynein axonemal intermediate chain 1 (701 aa).

Disordered regions lie at residues 1 to 45 and 119 to 165; these read MPSK…VRPP and EMVA…DIPA. Phosphoserine is present on residues Ser-124 and Ser-127. The segment covering 136–155 has biased composition (acidic residues); it reads ENLEEEEEPKEGEGEAEAEA. 5 WD repeats span residues 382–422, 431–474, 539–579, 581–621, and 629–668; these read SSES…SQPC, KHTD…LVHI, AHNM…PMFI, DLNS…YEAI, and KKKNKITHVQFNPIHPIIIVGDDRGHIICLKLSPNLRKMP.

Belongs to the dynein intermediate chain family. As to quaternary structure, consists of at least two heavy chains and a number of intermediate and light chains. Interacts with BICD2. Interacts with CFAP45 and CFAP52. Interacts with CFAP53.

Its subcellular location is the cytoplasm. It is found in the cytoskeleton. The protein localises to the cilium axoneme. Part of the dynein complex of respiratory cilia. The sequence is that of Dynein axonemal intermediate chain 1 (Dnai1) from Mus musculus (Mouse).